Reading from the N-terminus, the 78-residue chain is LYR motif-containing protein 9 (78 aa).

It belongs to the complex I LYR family. LYRM9 subfamily.

In Danio rerio (Zebrafish), this protein is LYR motif-containing protein 9 (lyrm9).